Consider the following 216-residue polypeptide: Adenylate kinase (216 aa).

10-15 contacts ATP; that stretch reads GAGKGT. The interval 30-59 is NMP; sequence STGDMLRAAVNAGTEVGKRAKAVMDAGKLV. AMP contacts are provided by residues Thr-31, Arg-36, 57–59, 85–88, and Gln-92; these read KLV and GFPR. Residues 126 to 163 form an LID region; the sequence is GRYTCAQCGTVYHDTDKVPVEEGVCDKCGSTHFKRRPD. Residue Arg-127 participates in ATP binding. Positions 130 and 133 each coordinate Zn(2+). Position 136–137 (136–137) interacts with ATP; that stretch reads VY. Cys-150 and Cys-153 together coordinate Zn(2+). Arg-160 and Arg-172 together coordinate AMP. Ala-200 is a binding site for ATP.

It belongs to the adenylate kinase family. As to quaternary structure, monomer.

The protein localises to the cytoplasm. The catalysed reaction is AMP + ATP = 2 ADP. It functions in the pathway purine metabolism; AMP biosynthesis via salvage pathway; AMP from ADP: step 1/1. In terms of biological role, catalyzes the reversible transfer of the terminal phosphate group between ATP and AMP. Plays an important role in cellular energy homeostasis and in adenine nucleotide metabolism. This Rhizobium etli (strain ATCC 51251 / DSM 11541 / JCM 21823 / NBRC 15573 / CFN 42) protein is Adenylate kinase.